The chain runs to 554 residues: Glucose-6-phosphate isomerase (554 aa).

Glu359 functions as the Proton donor in the catalytic mechanism. Active-site residues include His390 and Lys518.

It belongs to the GPI family.

It localises to the cytoplasm. It carries out the reaction alpha-D-glucose 6-phosphate = beta-D-fructose 6-phosphate. It participates in carbohydrate biosynthesis; gluconeogenesis. Its pathway is carbohydrate degradation; glycolysis; D-glyceraldehyde 3-phosphate and glycerone phosphate from D-glucose: step 2/4. Functionally, catalyzes the reversible isomerization of glucose-6-phosphate to fructose-6-phosphate. The sequence is that of Glucose-6-phosphate isomerase from Pseudomonas aeruginosa (strain LESB58).